We begin with the raw amino-acid sequence, 151 residues long: UPF0178 protein PFL_5989 (151 aa).

This sequence belongs to the UPF0178 family.

This chain is UPF0178 protein PFL_5989, found in Pseudomonas fluorescens (strain ATCC BAA-477 / NRRL B-23932 / Pf-5).